Reading from the N-terminus, the 379-residue chain is tRNA(Met) cytidine acetate ligase (379 aa).

ATP contacts are provided by residues 8 to 21, glycine 97, asparagine 153, and arginine 176; that span reads IAEFNPFHKGHEYL.

It belongs to the TmcAL family.

The protein resides in the cytoplasm. The enzyme catalyses cytidine(34) in elongator tRNA(Met) + acetate + ATP = N(4)-acetylcytidine(34) in elongator tRNA(Met) + AMP + diphosphate. Catalyzes the formation of N(4)-acetylcytidine (ac(4)C) at the wobble position of elongator tRNA(Met), using acetate and ATP as substrates. First activates an acetate ion to form acetyladenylate (Ac-AMP) and then transfers the acetyl group to tRNA to form ac(4)C34. This Lactococcus lactis subsp. cremoris (strain MG1363) protein is tRNA(Met) cytidine acetate ligase.